The primary structure comprises 219 residues: Elongation factor Ts (219 aa).

The interval 82–85 (TDFV) is involved in Mg(2+) ion dislocation from EF-Tu.

The protein belongs to the EF-Ts family.

It is found in the cytoplasm. In terms of biological role, associates with the EF-Tu.GDP complex and induces the exchange of GDP to GTP. It remains bound to the aminoacyl-tRNA.EF-Tu.GTP complex up to the GTP hydrolysis stage on the ribosome. This chain is Elongation factor Ts, found in Trichodesmium erythraeum (strain IMS101).